The sequence spans 429 residues: Zinc metalloproteinase nas-17 (429 aa).

Residues methionine 1–alanine 21 form the signal peptide. The N-linked (GlcNAc...) asparagine glycan is linked to asparagine 54. Residues arginine 62–glycine 251 enclose the Peptidase M12A domain. Intrachain disulfides connect cysteine 104–cysteine 250, cysteine 125–cysteine 144, cysteine 252–cysteine 272, and cysteine 274–cysteine 283. Position 152 (histidine 152) interacts with Zn(2+). Glutamate 153 is an active-site residue. Zn(2+) is bound by residues histidine 156 and histidine 162. The region spanning asparagine 245 to asparagine 284 is the EGF-like domain.

It depends on Zn(2+) as a cofactor.

Its subcellular location is the secreted. Its function is as follows. Metalloprotease. This Caenorhabditis elegans protein is Zinc metalloproteinase nas-17 (nas-17).